Reading from the N-terminus, the 130-residue chain is Small ribosomal subunit protein uS9 (130 aa).

This sequence belongs to the universal ribosomal protein uS9 family.

This chain is Small ribosomal subunit protein uS9, found in Streptococcus equi subsp. zooepidemicus (strain H70).